The sequence spans 221 residues: MLARQQPRRVARELSLLSLSQLSRKDTKPETLEQGDLEALLLAATRTLSGEVHEILETASAELSRSHERLLNSEIRASNLNSAKAMLEEAMTLTETVINRLALAVDLPETLQLAGQMEVRKFALELIGTVCRRRQQIDEQLQEAMVDWQLSRLAKIDQDILRLAIAELDYLGVPQKVAINEAVELAKRYSGQDGHRFINGVLRRVTEKKTDGAPVTPGEPR.

It belongs to the NusB family.

Functionally, involved in transcription antitermination. Required for transcription of ribosomal RNA (rRNA) genes. Binds specifically to the boxA antiterminator sequence of the ribosomal RNA (rrn) operons. This is Transcription antitermination protein NusB from Synechocystis sp. (strain ATCC 27184 / PCC 6803 / Kazusa).